Consider the following 633-residue polypeptide: MA3 DOMAIN-CONTAINING TRANSLATION REGULATORY FACTOR 4 (633 aa).

MI domains are found at residues 56 to 177 (DYKR…RAKK), 220 to 341 (ETKR…ERSD), 351 to 472 (RFKK…EISN), and 514 to 633 (DAKD…STDS). The Nuclear localization signal 1 signature appears at 94–101 (VKRLVSMA). Residues 389–396 (LKKLITLA) carry the Nuclear localization signal 2 motif.

It belongs to the PDCD4 family. As to quaternary structure, binds to EIF4A1. The association with ribosomes is modulated by cellular energy status and TOR activity. Mostly expressed, at low levels, in rosette leaves and flower buds, and, to a lower extent, in roots, stems, cauline leaves and flowers.

It is found in the nucleus. The protein resides in the cytoplasm. It localises to the cytosol. Its function is as follows. Involved in target of rapamycin (TOR)-regulated translation control, especially under energy-deficient conditions. The sequence is that of MA3 DOMAIN-CONTAINING TRANSLATION REGULATORY FACTOR 4 from Arabidopsis thaliana (Mouse-ear cress).